Reading from the N-terminus, the 228-residue chain is 6-carboxyhexanoate--CoA ligase (228 aa).

This sequence belongs to the BioW family. As to quaternary structure, homodimer. The cofactor is Mg(2+).

The catalysed reaction is heptanedioate + ATP + CoA = 6-carboxyhexanoyl-CoA + AMP + diphosphate. The protein operates within metabolic intermediate metabolism; pimeloyl-CoA biosynthesis; pimeloyl-CoA from pimelate: step 1/1. In terms of biological role, catalyzes the transformation of pimelate into pimeloyl-CoA with concomitant hydrolysis of ATP to AMP. This is 6-carboxyhexanoate--CoA ligase from Staphylococcus epidermidis (strain ATCC 35984 / DSM 28319 / BCRC 17069 / CCUG 31568 / BM 3577 / RP62A).